The following is a 424-amino-acid chain: Tyrosine--tRNA ligase (424 aa).

Tyr37 contributes to the L-tyrosine binding site. A 'HIGH' region motif is present at residues 42 to 51; the sequence is PTADSLHLGH. The residue at position 144 (Lys144) is an N6-acetyllysine. 2 residues coordinate L-tyrosine: Tyr175 and Gln179. The 'KMSKS' region motif lies at 235–239; that stretch reads KFGKT. Lys238 is an ATP binding site. The region spanning 357-414 is the S4 RNA-binding domain; sequence ADLMQALVDSELQPSRGQARKTIASNAVTINGEKQSDPEYFFKEEDRLFGRFTLLRRG.

This sequence belongs to the class-I aminoacyl-tRNA synthetase family. TyrS type 1 subfamily. In terms of assembly, homodimer.

It localises to the cytoplasm. The enzyme catalyses tRNA(Tyr) + L-tyrosine + ATP = L-tyrosyl-tRNA(Tyr) + AMP + diphosphate + H(+). Catalyzes the attachment of tyrosine to tRNA(Tyr) in a two-step reaction: tyrosine is first activated by ATP to form Tyr-AMP and then transferred to the acceptor end of tRNA(Tyr). The sequence is that of Tyrosine--tRNA ligase from Escherichia fergusonii (strain ATCC 35469 / DSM 13698 / CCUG 18766 / IAM 14443 / JCM 21226 / LMG 7866 / NBRC 102419 / NCTC 12128 / CDC 0568-73).